Reading from the N-terminus, the 944-residue chain is E3 ubiquitin-protein ligase JMJ24 (944 aa).

Disordered regions lie at residues Q20–D40 and A77–G103. The 46-residue stretch at I38–A83 folds into the WRC domain. The Nuclear localization signal 1 motif lies at K73–A80. A PHD-type; atypical zinc finger spans residues G217–L269. Zn(2+) is bound by residues C220, C223, C234, C237, C243, C246, C263, and C266. The Nuclear localization signal 2 motif lies at E323–E330. A JmjC domain is found at P621 to R873. Positions E685 to E703 are enriched in basic and acidic residues. Residues E685–R715 are disordered.

This sequence belongs to the JARID1 histone demethylase family. As to quaternary structure, homodimer. Interacts with RDR2. Binds to CMT3. Associates with the E2 ubiquitin-conjugating enzyme UBC10. In terms of processing, self-ubiquitinates. As to expression, expressed in inflorescences, flowers, roots, siliques, leaves and stems, especially in the vasculature (mainly phloem), with highest levels in floral organs.

The protein resides in the nucleus. It catalyses the reaction S-ubiquitinyl-[E2 ubiquitin-conjugating enzyme]-L-cysteine + [acceptor protein]-L-lysine = [E2 ubiquitin-conjugating enzyme]-L-cysteine + N(6)-ubiquitinyl-[acceptor protein]-L-lysine.. Its function is as follows. Binds histone H3 but seems to have lost demethylase activity probably due to its inability to bind iron Fe(2+). Possesses E3 ubiquitin ligase activity and targets directly CMT3 for proteasomal degradation to initiate destabilization of the heterochromatic state (e.g. CHG cytosine methylation and H3K9me2) of endogenous silenced loci. Required for the removal of repressive H3K9me2 histone marks to facilitate the transcription of AtSN1, AtMu1c, solo LTR and SDC, thus counteracting their transcriptional silencing. Mainly required to promote the basal level transcription of silenced loci such as TE and repeats targeted by RNA-dependent DNA methylation (RdDM) for silencing, a specialized branch of the RNA interference (RNAi) pathway. Also cooperates with RNAi pathways for gene silencing both by contributing to the production of 24-nt siRNA to initiate RdDM and by recruiting RDR2 to enable local transcripts to make dsRNA. Antagonizes histone H3K9 demethylase IBM1/JMJ25 function. This is E3 ubiquitin-protein ligase JMJ24 from Arabidopsis thaliana (Mouse-ear cress).